The sequence spans 504 residues: Xylose import ATP-binding protein XylG (504 aa).

ABC transporter domains are found at residues 6 to 243 and 262 to 504; these read LEMQ…VGRE and VRNF…TGGK. Position 38-45 (38-45) interacts with ATP; that stretch reads GENGAGKS.

This sequence belongs to the ABC transporter superfamily. Xylose importer (TC 3.A.1.2.4) family. The complex is composed of two ATP-binding proteins (XylG), two transmembrane proteins (XylH) and a solute-binding protein (XylF).

Its subcellular location is the cell membrane. The enzyme catalyses D-xylose(out) + ATP + H2O = D-xylose(in) + ADP + phosphate + H(+). Functionally, part of the ABC transporter complex XylFGH involved in xylose import. Responsible for energy coupling to the transport system. In Moorella thermoacetica (strain ATCC 39073 / JCM 9320), this protein is Xylose import ATP-binding protein XylG.